The chain runs to 332 residues: MKVLLYSQKQSMLKKSGIGRAFYHQKRALEAVGIEYTTDPKDTYDLVHVNIAHSNKIKKFRKKYPVIVHGHSTVQDFRRSFAFWRVIAPFFYKHLQNIYGIADLIITPTRYSKFLIESMHVVKSPVVALSNGIDLDAYEYKQENVDAFRKHFDLEPNQKVVIGVGLLFERKGIHDFIEVARTMPNVTFIWFGNLSKLATTHFIRKRIKNKPKNMIMPGYVDGAVIKGAFSGADCVFFPSYEETEGIVVLEGLASKTPVVLRDIPVYYDWLFHKEHVLKGHNNFEFSKLIEKVLHEDQTEMIENGYKIVQDRSIEKIGEGLKQAYQEVIKIKR.

This sequence belongs to the glycosyltransferase group 1 family. Glycosyltransferase 4 subfamily. Requires Mg(2+) as cofactor.

The protein localises to the cell membrane. The enzyme catalyses a 1,2-diacyl-sn-glycerol + UDP-alpha-D-glucose = a 1,2-diacyl-3-O-(alpha-D-glucopyranosyl)-sn-glycerol + UDP + H(+). It carries out the reaction a 1,2-diacyl-3-O-(alpha-D-glucopyranosyl)-sn-glycerol + UDP-alpha-D-glucose = a 1,2-diacyl-3-O-[alpha-D-glucosyl-(1-&gt; 2)-alpha-D-glucosyl]-sn-glycerol + UDP + H(+). The protein operates within glycolipid metabolism; diglucosyl-diacylglycerol biosynthesis. With respect to regulation, activated by the negatively charged lipids phosphatidylglycerol (PG), cardiolipin (CL), nonbilayer-prone 1,3-DAG, 1,2-dioleoylphosphatidylglycerol (DOPG) and 1,2-dioleoylphosphatidylserine (DOPS). Inhibited by 1,2-diacyl-3-O-(alpha-D-galactopyranosyl)-sn-glycerol, 1,2-diacyl-3-O-[6-O-acyl(alpha-D-glucopyranosyl)]-sn-glycerol and 1,2-diacyl-3-O-[alpha-D-glucopyranosyl-(1-&gt;2)-O-(6-O-acyl-alpha-D-glucopyranosyl)]-sn-glycerol. Its function is as follows. Processive glucosyltransferase involved in the biosynthesis of both the non-bilayer-prone alpha-monoglucosyldiacylglycerol and the bilayer-forming membrane lipid alpha-diglucosyldiacylglycerol. These are major components for maintaining the anionic lipid surface charge density, for balancing the bilayer to non-bilayer phase equilibria and for keeping a constant lipid bilayer spontaneous curvature (curvature packing stress). Catalyzes the transfer of a glucosyl residue from UDP-Glc to diacylglycerol (DAG) acceptor to form the corresponding alpha-glucosyl-DAG (1,2-diacyl-3-O-(alpha-D-glucopyranosyl)-sn-glycerol), which then acts as acceptor to give alpha-diglucosyl-DAG product (3-O-(alpha-D-glucopyranosyl-alpha-(1-&gt;2)-D-glucopyranosyl)-1,2-diacyl-sn-glycerol). It can only use UDP-Glc as sugar donor. In Acholeplasma laidlawii, this protein is Processive diacylglycerol alpha-glucosyltransferase (dgs).